A 252-amino-acid chain; its full sequence is 3-dehydroquinate dehydratase (252 aa).

Residues serine 21, 46 to 48 (EWR), and arginine 82 each bind 3-dehydroquinate. The active-site Proton donor/acceptor is the histidine 143. The Schiff-base intermediate with substrate role is filled by lysine 170. Residues arginine 213, serine 232, and glutamine 236 each coordinate 3-dehydroquinate.

It belongs to the type-I 3-dehydroquinase family. Homodimer.

The catalysed reaction is 3-dehydroquinate = 3-dehydroshikimate + H2O. It functions in the pathway metabolic intermediate biosynthesis; chorismate biosynthesis; chorismate from D-erythrose 4-phosphate and phosphoenolpyruvate: step 3/7. In terms of biological role, involved in the third step of the chorismate pathway, which leads to the biosynthesis of aromatic amino acids. Catalyzes the cis-dehydration of 3-dehydroquinate (DHQ) and introduces the first double bond of the aromatic ring to yield 3-dehydroshikimate. In Shigella dysenteriae serotype 1 (strain Sd197), this protein is 3-dehydroquinate dehydratase.